The following is a 120-amino-acid chain: Large ribosomal subunit protein uL18 (120 aa).

Belongs to the universal ribosomal protein uL18 family. In terms of assembly, part of the 50S ribosomal subunit; part of the 5S rRNA/L5/L18/L25 subcomplex. Contacts the 5S and 23S rRNAs.

Functionally, this is one of the proteins that bind and probably mediate the attachment of the 5S RNA into the large ribosomal subunit, where it forms part of the central protuberance. The sequence is that of Large ribosomal subunit protein uL18 from Oleidesulfovibrio alaskensis (strain ATCC BAA-1058 / DSM 17464 / G20) (Desulfovibrio alaskensis).